Consider the following 1262-residue polypeptide: Separin homolog sep-1 (1262 aa).

One can recognise a Peptidase C50 domain in the interval 957–1051 (VQNAYYILDP…SVRTIPQALG (95 aa)). Cys-1040 is a catalytic residue. The segment at 1147-1262 (KDQRNLPQTP…ARTPSRSRNL (116 aa)) is disordered. Polar residues-rich tracts occupy residues 1151-1162 (NLPQTPKTSART) and 1177-1197 (FVTS…NKSP). Residues 1243–1262 (TPTTRTTRSSARTPSRSRNL) are compositionally biased toward low complexity.

In terms of assembly, forms a complex with securin-like protein ify-1 (via C-terminus). Interaction with ify-1 stabilizes sep-1. Also maintains the complex in the cytoplasm during interphase and recruits it to chromosomes during the first meiotic division. In terms of tissue distribution, expressed in oocytes. Expressed in male germline. Expressed in spermatocytes but undetectable in spermatids (at protein level).

Its subcellular location is the cytoplasm. It is found in the chromosome. The protein localises to the cytoplasmic granule. The protein resides in the cytoskeleton. It localises to the microtubule organizing center. Its subcellular location is the centrosome. It is found in the spindle. The protein localises to the cleavage furrow. The protein resides in the midbody. It carries out the reaction All bonds known to be hydrolyzed by this endopeptidase have arginine in P1 and an acidic residue in P4. P6 is often occupied by an acidic residue or by a hydroxy-amino-acid residue, the phosphorylation of which enhances cleavage.. With respect to regulation, probably maintained in an inactive state via its interaction with securin ify-1 which acts as a pseudosubstrate thereby blocking access to the catalytic site. Upon ify-1 degradation at the onset of anaphase, sep-1 is likely to become active. In addition, interaction with ify-1 stabilizes sep-1. Cysteine protease, which plays a central role in homologous chromosome separation during meiosis I and in sister chromatid separation during embryonic mitosis. Promotes chromosome/sister chromatid segregation by cleaving the scc-1 (mitosis) and rec-8 (meiosis) subunits of the cohesin complex at the onset of anaphase. May cleave histone H3-like protein cpar-1 during meiosis I metaphase-anaphase transition. Promotes cortical granule exocytosis after oocyte fertilization during the first meiotic anaphase. Essential for embryonic cytokinesis by regulating rab-11-positive vesicle trafficking at the plasma membrane at the cleavage furrow and midbody. Regulates centriole segregation during spermatocyte meiosis. Required for embryonic anterior-posterior axis formation. In Caenorhabditis elegans, this protein is Separin homolog sep-1.